The following is a 223-amino-acid chain: 7-cyano-7-deazaguanine synthase (223 aa).

15–25 (FSGGQDSTTCL) serves as a coordination point for ATP. Zn(2+) is bound by residues cysteine 191, cysteine 200, cysteine 203, and cysteine 206.

This sequence belongs to the QueC family. As to quaternary structure, homodimer. Requires Zn(2+) as cofactor.

The enzyme catalyses 7-carboxy-7-deazaguanine + NH4(+) + ATP = 7-cyano-7-deazaguanine + ADP + phosphate + H2O + H(+). It participates in purine metabolism; 7-cyano-7-deazaguanine biosynthesis. Functionally, catalyzes the ATP-dependent conversion of 7-carboxy-7-deazaguanine (CDG) to 7-cyano-7-deazaguanine (preQ(0)). The polypeptide is 7-cyano-7-deazaguanine synthase (Staphylococcus haemolyticus (strain JCSC1435)).